The sequence spans 85 residues: Alpha-insect toxin Bot14 (85 aa).

An N-terminal signal peptide occupies residues 1–18 (MSSLMISTAMKGKAPYRQ). Residues 20–84 (RDGYIAQPHN…GIIVHGEKCH (65 aa)) form the LCN-type CS-alpha/beta domain. 4 disulfides stabilise this stretch: Cys30–Cys83, Cys34–Cys55, Cys41–Cys65, and Cys45–Cys67.

It belongs to the long (4 C-C) scorpion toxin superfamily. Sodium channel inhibitor family. Alpha subfamily. As to expression, expressed by the venom gland.

It is found in the secreted. Its function is as follows. Alpha toxins bind voltage-independently at site-3 of sodium channels (Nav) and inhibit the inactivation of the activated channels, thereby blocking neuronal transmission. This toxin is active only on insects. This Buthus occitanus tunetanus (Common European scorpion) protein is Alpha-insect toxin Bot14.